A 157-amino-acid chain; its full sequence is Histidine-containing phosphotransfer protein 5 (157 aa).

Methionine 1 bears the N-acetylmethionine mark. Residues 41 to 148 enclose the HPt domain; that stretch reads TPDFVAEVVS…NLEKQILQAG (108 aa). Histidine 83 is modified (phosphohistidine).

Interacts with the B-type response regulators ARR1 and ARR2. Binds to AHK2, AHK3, AHK4 and AHK5. Two-component system major event consists of a His-to-Asp phosphorelay between a sensor histidine kinase (HK) and a response regulator (RR). In plants, the His-to-Asp phosphorelay involves an additional intermediate named Histidine-containing phosphotransfer protein (HPt). This multistep phosphorelay consists of a His-Asp-His-Asp sequential transfer of a phosphate group between first a His and an Asp of the HK protein, followed by the transfer to a conserved His of the HPt protein and finally the transfer to an Asp in the receiver domain of the RR protein. Expressed in the whole plant.

The protein localises to the cytoplasm. The protein resides in the cytosol. It localises to the nucleus. Functionally, functions as a two-component phosphorelay mediator between cytokinin sensor histidine kinases and response regulators (B-type ARRs). Plays an important role in propagating cytokinin signal transduction through the multistep His-to-Asp phosphorelay. This is Histidine-containing phosphotransfer protein 5 (AHP5) from Arabidopsis thaliana (Mouse-ear cress).